A 52-amino-acid polypeptide reads, in one-letter code: uncharacterized protein (52 aa).

A helical transmembrane segment spans residues 21 to 40; it reads VAMNSYVELLFLSVPLIHIF.

The protein resides in the cell membrane. This is an uncharacterized protein from Bacillus subtilis (strain 168).